A 505-amino-acid chain; its full sequence is MLFLNAKFIDLDLGENAVIVNEDDLKGTSYYPQDRVLIESHAGSVIGNIYSTKTMVQKGEVGMLVSELAEISISEGEEVKLRHAEKPESIPFIKKKMDGQVLNPHEIRTIIDEIVSKKLSNIELSAFVSSTYINGMNMDEIGEMTKRIAETGDMISWEKNLVVDIHSIGGVPGNKYALLSIPILAAAGITIPKTSSRAITSPAGTADVMEVLTNVELKEDEIKRIVKTTNGCLVWGGGVNLAPADDIIINVERPVSIDPQPQLLASVMAKKIATGIKYSVIDIPVGKGVKIKNEAEGAKLARKFIELGELLNIKVECVLTYGGQPLGRAIGPALEAKEAIEALQDPKNAPKSLIEKALSLAGILLELGGAAQIGEGQNLAWEILESGRALEKFNQIIIEQGGTPKKPEEIELGDYIEEIIAPIDGYVTDINNTGITNVVKEAGAPRDKKAGLLLNSKIGNKVKKGDVLYTIYSGSEERLVSAVNLARRVYPVKVEGMLIERISKF.

Residues Gly170, 196-201, and Thr205 each bind AMP; that span reads SRAITS. Residue Asp258 is the Proton donor of the active site. AMP is bound by residues Ser266 and Lys290.

The protein belongs to the thymidine/pyrimidine-nucleoside phosphorylase family. Type 2 subfamily.

The catalysed reaction is AMP + phosphate = alpha-D-ribose 1,5-bisphosphate + adenine. The enzyme catalyses CMP + phosphate = cytosine + alpha-D-ribose 1,5-bisphosphate. It carries out the reaction UMP + phosphate = alpha-D-ribose 1,5-bisphosphate + uracil. In terms of biological role, catalyzes the conversion of AMP and phosphate to adenine and ribose 1,5-bisphosphate (R15P). Exhibits phosphorylase activity toward CMP and UMP in addition to AMP. Functions in an archaeal AMP degradation pathway, together with R15P isomerase and RubisCO. The protein is AMP phosphorylase of Methanococcus maripaludis (strain DSM 14266 / JCM 13030 / NBRC 101832 / S2 / LL).